The following is a 205-amino-acid chain: Proteasome subunit beta type-3 (205 aa).

This sequence belongs to the peptidase T1B family. As to quaternary structure, the 26S proteasome consists of a 20S proteasome core and two 19S regulatory subunits. The 20S proteasome core is composed of 28 subunits that are arranged in four stacked rings, resulting in a barrel-shaped structure. The two end rings are each formed by seven alpha subunits, and the two central rings are each formed by seven beta subunits. The catalytic chamber with the active sites is on the inside of the barrel.

The protein localises to the cytoplasm. It is found in the nucleus. Its function is as follows. Non-catalytic component of the proteasome, a multicatalytic proteinase complex which is characterized by its ability to cleave peptides with Arg, Phe, Tyr, Leu, and Glu adjacent to the leaving group at neutral or slightly basic pH. The proteasome has an ATP-dependent proteolytic activity. This chain is Proteasome subunit beta type-3 (PSB3), found in Trypanosoma brucei brucei.